The following is a 436-amino-acid chain: UPF0597 protein YhaM (436 aa).

Belongs to the UPF0597 family.

This is UPF0597 protein YhaM from Escherichia coli (strain K12 / MC4100 / BW2952).